The chain runs to 512 residues: N-acetyltryptophan 6-hydroxylase ivoC (512 aa).

The chain crosses the membrane as a helical span at residues 6–26; it reads LVFSFPAWALLLVLTLLYTLY. Residue asparagine 118 is glycosylated (N-linked (GlcNAc...) asparagine). Cysteine 453 lines the heme pocket.

This sequence belongs to the cytochrome P450 family. The cofactor is heme.

It localises to the membrane. It participates in pigment biosynthesis. In terms of biological role, N-acetyltryptophan 6-hydroxylase; part of the pathway that mediates the biosynthesis of the gray-brown conidiophore pigment. The first step of the pathway is performed by the nonribosomal peptide synthetase ivoA that catalyzes ATP-dependent unidirectional stereoinversion of L-tryptophan to D-tryptophan with complete conversion. While the stereoinversion is catalyzed by the epimerization (E) domain of ivoA, the terminal condensation (C) domain stereoselectively hydrolyzes D-tryptophanyl-S-phosphopantetheine thioester and thus represents a non-canonical C domain function. D-tryptophan is acetylated, probably by an endogenous acetyltransferase. N-acetyltryptophan is further 6-hydroxylated into N-acetyl-6-hydroxytryptophan (AHT) by the cytochrome P450 monooxygenase ivoC. N-acetyl-6-hydroxytryptophan is substrate of the N-acetyl-6-hydroxytryptophan oxidase ivoB to produce the gray-brown conidiophore pigment. The protein is N-acetyltryptophan 6-hydroxylase ivoC of Emericella nidulans (strain FGSC A4 / ATCC 38163 / CBS 112.46 / NRRL 194 / M139) (Aspergillus nidulans).